Reading from the N-terminus, the 311-residue chain is Probable dihydroorotate dehydrogenase A (fumarate) (311 aa).

Residues Ser20 and 44–45 (KT) contribute to the FMN site. Substrate is bound by residues Lys44, 68–72 (NSMGL), and Asn127. Residue Asn127 coordinates FMN. Cys130 acts as the Nucleophile in catalysis. Lys164 and Ile192 together coordinate FMN. 193–194 (NS) provides a ligand contact to substrate. FMN contacts are provided by residues Gly221, 249–250 (GG), and 271–272 (GT).

The protein belongs to the dihydroorotate dehydrogenase family. Type 1 subfamily. Homodimer. It depends on FMN as a cofactor.

Its subcellular location is the cytoplasm. The enzyme catalyses (S)-dihydroorotate + fumarate = orotate + succinate. The protein operates within pyrimidine metabolism; UMP biosynthesis via de novo pathway. Its function is as follows. Catalyzes the conversion of dihydroorotate to orotate with fumarate as the electron acceptor. The polypeptide is Probable dihydroorotate dehydrogenase A (fumarate) (pyrDA) (Enterococcus faecalis (strain ATCC 700802 / V583)).